A 243-amino-acid chain; its full sequence is tRNA (guanine-N(1)-)-methyltransferase (243 aa).

Residues Gly-113 and 133–138 (IGDFVL) contribute to the S-adenosyl-L-methionine site.

This sequence belongs to the RNA methyltransferase TrmD family. Homodimer.

The protein resides in the cytoplasm. The catalysed reaction is guanosine(37) in tRNA + S-adenosyl-L-methionine = N(1)-methylguanosine(37) in tRNA + S-adenosyl-L-homocysteine + H(+). In terms of biological role, specifically methylates guanosine-37 in various tRNAs. This is tRNA (guanine-N(1)-)-methyltransferase from Bacillus licheniformis (strain ATCC 14580 / DSM 13 / JCM 2505 / CCUG 7422 / NBRC 12200 / NCIMB 9375 / NCTC 10341 / NRRL NRS-1264 / Gibson 46).